A 798-amino-acid polypeptide reads, in one-letter code: Transferrin receptor protein 2 (798 aa).

At Met-1–Pro-81 the chain is on the cytoplasmic side. The Endocytosis signal motif lies at Tyr-23–Val-26. A disordered region spans residues Arg-25–Glu-44. Acidic residues predominate over residues Asn-33–Glu-44. The chain crosses the membrane as a helical; Signal-anchor for type II membrane protein span at residues Tyr-82–Phe-102. The Extracellular portion of the chain corresponds to Arg-103–Phe-798. Asn-235, Asn-334, and Asn-535 each carry an N-linked (GlcNAc...) asparagine glycan.

This sequence belongs to the peptidase M28 family. M28B subfamily. Homodimer.

The protein resides in the cell membrane. Mediates cellular uptake of transferrin-bound iron in a non-iron dependent manner. May be involved in iron metabolism, hepatocyte function and erythrocyte differentiation. This chain is Transferrin receptor protein 2 (Tfr2), found in Rattus norvegicus (Rat).